Here is a 280-residue protein sequence, read N- to C-terminus: 4-diphosphocytidyl-2-C-methyl-D-erythritol kinase (280 aa).

Lys-8 is an active-site residue. 91–101 (PVSAGLAGGST) contacts ATP. Asp-133 is an active-site residue.

This sequence belongs to the GHMP kinase family. IspE subfamily.

The catalysed reaction is 4-CDP-2-C-methyl-D-erythritol + ATP = 4-CDP-2-C-methyl-D-erythritol 2-phosphate + ADP + H(+). It functions in the pathway isoprenoid biosynthesis; isopentenyl diphosphate biosynthesis via DXP pathway; isopentenyl diphosphate from 1-deoxy-D-xylulose 5-phosphate: step 3/6. In terms of biological role, catalyzes the phosphorylation of the position 2 hydroxy group of 4-diphosphocytidyl-2C-methyl-D-erythritol. The polypeptide is 4-diphosphocytidyl-2-C-methyl-D-erythritol kinase (Clostridium botulinum (strain Eklund 17B / Type B)).